Reading from the N-terminus, the 137-residue chain is Ribosome-binding factor A (137 aa).

It belongs to the RbfA family. In terms of assembly, monomer. Binds 30S ribosomal subunits, but not 50S ribosomal subunits or 70S ribosomes.

The protein resides in the cytoplasm. One of several proteins that assist in the late maturation steps of the functional core of the 30S ribosomal subunit. Associates with free 30S ribosomal subunits (but not with 30S subunits that are part of 70S ribosomes or polysomes). Required for efficient processing of 16S rRNA. May interact with the 5'-terminal helix region of 16S rRNA. The protein is Ribosome-binding factor A of Rhodopseudomonas palustris (strain BisB18).